Here is a 336-residue protein sequence, read N- to C-terminus: MYYPFVRKALFQLDPERAHEFTFQQLRRITGTPFEALVRQKVPAKPVNCMGLTFKNPLGLAAGLDKDGECIDALGAMGFGSIEIGTVTPRPQPGNDKPRLFRLVDAEGLINRMGFNNFGVDNLVENVKKAHYDGVLGINIGKNKDTPVEQGKDDYLICMEKIYAYAGYIAINISSPNTPGLRTLQYGEALDDLLTAIKNKQNDLQAMHHKYVPIAVKIAPDLSEDELIQVADSLVRHNIDGVIATNTTLDRSLVQGMKNCDQTGGLSGRPLQLKSTEIIRRLSLELNGRLPIIGVGGIDSVIAAREKIAAGASLVQIYSGFIFKGPPLIKEIVTHI.

FMN contacts are provided by residues 62–66 and Thr86; that span reads AGLDK. A substrate-binding site is contributed by Lys66. 111–115 provides a ligand contact to substrate; the sequence is NRMGF. Positions 139 and 172 each coordinate FMN. Asn172 serves as a coordination point for substrate. The active-site Nucleophile is Ser175. Residue Asn177 participates in substrate binding. Lys217 and Thr245 together coordinate FMN. Residue 246-247 participates in substrate binding; sequence NT. Residues Gly268, Gly297, and 318–319 each bind FMN; that span reads YS.

The protein belongs to the dihydroorotate dehydrogenase family. Type 2 subfamily. Monomer. FMN serves as cofactor.

It is found in the cell membrane. The catalysed reaction is (S)-dihydroorotate + a quinone = orotate + a quinol. It functions in the pathway pyrimidine metabolism; UMP biosynthesis via de novo pathway; orotate from (S)-dihydroorotate (quinone route): step 1/1. In terms of biological role, catalyzes the conversion of dihydroorotate to orotate with quinone as electron acceptor. This Shigella dysenteriae serotype 1 (strain Sd197) protein is Dihydroorotate dehydrogenase (quinone).